The primary structure comprises 223 residues: Putative 3-methyladenine DNA glycosylase (223 aa).

It belongs to the DNA glycosylase MPG family.

This chain is Putative 3-methyladenine DNA glycosylase, found in Rhodococcus jostii (strain RHA1).